Consider the following 309-residue polypeptide: UDP-N-acetylenolpyruvoylglucosamine reductase (309 aa).

Positions Arg34 to Ile221 constitute an FAD-binding PCMH-type domain. Arg179 is a catalytic residue. The Proton donor role is filled by Ser228. Glu298 is a catalytic residue.

The protein belongs to the MurB family. The cofactor is FAD.

The protein localises to the cytoplasm. The catalysed reaction is UDP-N-acetyl-alpha-D-muramate + NADP(+) = UDP-N-acetyl-3-O-(1-carboxyvinyl)-alpha-D-glucosamine + NADPH + H(+). It functions in the pathway cell wall biogenesis; peptidoglycan biosynthesis. In terms of biological role, cell wall formation. The polypeptide is UDP-N-acetylenolpyruvoylglucosamine reductase (Methylorubrum extorquens (strain CM4 / NCIMB 13688) (Methylobacterium extorquens)).